A 54-amino-acid chain; its full sequence is Ovomucoid (54 aa).

Residues 4–54 (VDCSDYPKPACTLEYMPLCGSDNKTYGNKCNFCNAVVDSNGTLTLSHFGKC) form the Kazal-like domain. 3 cysteine pairs are disulfide-bonded: Cys6–Cys36, Cys14–Cys33, and Cys22–Cys54. A glycan (N-linked (GlcNAc...) asparagine) is linked at Asn43.

The protein resides in the secreted. In Dendrocygna arcuata (Wandering whistling-duck), this protein is Ovomucoid.